We begin with the raw amino-acid sequence, 329 residues long: BTB/POZ domain-containing protein At1g55760 (329 aa).

The BTB domain maps to T164 to F231.

The protein operates within protein modification; protein ubiquitination. Functionally, may act as a substrate-specific adapter of an E3 ubiquitin-protein ligase complex (CUL3-RBX1-BTB) which mediates the ubiquitination and subsequent proteasomal degradation of target proteins. This is BTB/POZ domain-containing protein At1g55760 from Arabidopsis thaliana (Mouse-ear cress).